The primary structure comprises 221 residues: 7-cyano-7-deazaguanine synthase (221 aa).

Tyr9 to Leu19 is a binding site for ATP. Zn(2+) contacts are provided by Cys186, Cys194, Cys197, and Cys200.

This sequence belongs to the QueC family. Requires Zn(2+) as cofactor.

The enzyme catalyses 7-carboxy-7-deazaguanine + NH4(+) + ATP = 7-cyano-7-deazaguanine + ADP + phosphate + H2O + H(+). Its pathway is purine metabolism; 7-cyano-7-deazaguanine biosynthesis. In terms of biological role, catalyzes the ATP-dependent conversion of 7-carboxy-7-deazaguanine (CDG) to 7-cyano-7-deazaguanine (preQ(0)). The protein is 7-cyano-7-deazaguanine synthase of Psychromonas ingrahamii (strain DSM 17664 / CCUG 51855 / 37).